The sequence spans 691 residues: MLIGQVSRLSAIPPLALQHTLRPLHSSSVLAAGGKRPKQSPSHSRNSPRQKPDWEKRGSNRGRSEQPRASRFGLKSSGTTSFRSEPPRARRVISDSSSGSSASITPKGQHVPTSSRRLLPFSSSDTIPKPSHRFKLEPATMPPNLTPRSFNRDDGVTEEYINGLPAYPTPPTTLANEEQARPRTFDDFGLEEGLVKSLKGLYGEDGKTTPIETLSFHHFTQPDIASAPIGSQRVLLGAETGSGKTVSYLIPLFHHLKRTDPGPSVTSSFFADSENTLHPRSIILSPTHELTRQSTQFAKILTHNTKLSVHGMSSTVSGGVGEKRGSVDVLLGTVGSLRRMFGMTRSEEEQEKEDYIRGKRIWQDEQEKGMVEGDKVEWVVIDEADVLLGREFYLDTISVLSQVKQANLILCTATLPPFLINLLTTNPFFTKKEPFIHLLSPGLHKLPPKLLTRFIRPSTTGNKHGDVAHQVRLTLAEDAKAAKAEGREGEEPSKIVIFCNSDKQVEQVSGILGTKKIDCLAWTGAGEERLRGRNGSLNDFLQRPHLPGHEPPAPLPSLEPRETKPIFQDKNGTTPNVSQVTRRRVLVTTSLLSRGLDFHPSVSSVFLVQPPRDVLDFVHRAGRAGRAGRPGRVVVFGIDEGGTLGEGAKNNKGGKGQGPLKKDGKTALGDRLKDVLGKREVVGAMGKRVRT.

The N-terminal 31 residues, 1–31 (MLIGQVSRLSAIPPLALQHTLRPLHSSSVLA), are a transit peptide targeting the mitochondrion. A disordered region spans residues 31-148 (AAGGKRPKQS…ATMPPNLTPR (118 aa)). Positions 39-49 (QSPSHSRNSPR) are enriched in polar residues. The span at 50 to 68 (QKPDWEKRGSNRGRSEQPR) shows a compositional bias: basic and acidic residues. Low complexity predominate over residues 94–103 (SDSSSGSSAS). Positions 111–126 (VPTSSRRLLPFSSSDT) are enriched in polar residues. A Q motif motif is present at residues 183 to 213 (RTFDDFGLEEGLVKSLKGLYGEDGKTTPIET). Residues 225–433 (ASAPIGSQRV…TTNPFFTKKE (209 aa)) enclose the Helicase ATP-binding domain. Position 238–245 (238–245 (AETGSGKT)) interacts with ATP. The DEAD box signature appears at 382 to 385 (DEAD). Residues 474 to 691 (TLAEDAKAAK…VGAMGKRVRT (218 aa)) enclose the Helicase C-terminal domain. The interval 644-667 (LGEGAKNNKGGKGQGPLKKDGKTA) is disordered.

This sequence belongs to the DEAD box helicase family. MRH4 subfamily.

The protein resides in the mitochondrion. It catalyses the reaction ATP + H2O = ADP + phosphate + H(+). ATP-binding RNA helicase involved in mitochondrial RNA metabolism. Required for maintenance of mitochondrial DNA. This chain is ATP-dependent RNA helicase MRH4, mitochondrial (MRH4), found in Cryptococcus neoformans var. neoformans serotype D (strain JEC21 / ATCC MYA-565) (Filobasidiella neoformans).